We begin with the raw amino-acid sequence, 399 residues long: Sister chromatid cohesion protein DCC1 (399 aa).

It belongs to the DCC1 family. As to quaternary structure, component of the CTF18-RFC complex which consists of CTF8, CTF18, DSCC1 and the RFC complex. Interacts with CTF8 and CTF18. Interacts with DDX11.

Its subcellular location is the nucleus. In terms of biological role, loads PCNA onto primed templates regulating velocity, spacing and restart activity of replication forks. May couple DNA replication to sister chromatid cohesion through regulation of the acetylation of the cohesin subunit SMC3. The sequence is that of Sister chromatid cohesion protein DCC1 (DSCC1) from Mus musculus (Mouse).